Reading from the N-terminus, the 68-residue chain is MPDVRRCDFCGRIIEPGTGKMFVKNDGTILWFCSSKCERNMLKLGRDPKKVRWTEKHREFMAEQRGEL.

Residues Cys-7, Cys-10, Cys-33, and Cys-37 each contribute to the Zn(2+) site. The segment at 7–37 (CDFCGRIIEPGTGKMFVKNDGTILWFCSSKC) adopts a C4-type zinc-finger fold.

This sequence belongs to the eukaryotic ribosomal protein eL24 family. Part of the 50S ribosomal subunit. Forms a cluster with proteins L3 and L14. Requires Zn(2+) as cofactor.

Its function is as follows. Binds to the 23S rRNA. This Methanopyrus kandleri (strain AV19 / DSM 6324 / JCM 9639 / NBRC 100938) protein is Large ribosomal subunit protein eL24.